The chain runs to 158 residues: S-ribosylhomocysteine lyase (158 aa).

Residues histidine 54, histidine 58, and cysteine 125 each contribute to the Fe cation site.

The protein belongs to the LuxS family. As to quaternary structure, homodimer. Fe cation is required as a cofactor.

It catalyses the reaction S-(5-deoxy-D-ribos-5-yl)-L-homocysteine = (S)-4,5-dihydroxypentane-2,3-dione + L-homocysteine. Functionally, involved in the synthesis of autoinducer 2 (AI-2) which is secreted by bacteria and is used to communicate both the cell density and the metabolic potential of the environment. The regulation of gene expression in response to changes in cell density is called quorum sensing. Catalyzes the transformation of S-ribosylhomocysteine (RHC) to homocysteine (HC) and 4,5-dihydroxy-2,3-pentadione (DPD). The chain is S-ribosylhomocysteine lyase from Lactococcus lactis subsp. cremoris (strain MG1363).